A 237-amino-acid polypeptide reads, in one-letter code: Transcriptional regulatory protein YvrH (237 aa).

In terms of domain architecture, Response regulatory spans 5–119 (SILIVDDEKA…ELAARIRAHL (115 aa)). At Asp-55 the chain carries 4-aspartylphosphate. Residues 131–230 (NQTYTYDYFT…VRGLGYRFIP (100 aa)) constitute a DNA-binding region (ompR/PhoB-type).

Post-translationally, phosphorylated by YvrG.

Its subcellular location is the cytoplasm. Member of the two-component regulatory system YvrG/YvrH that positively regulates 7 transcriptional units (wprA, wapA-yxxG, dltABCDE, sunA, sunT-bdbA-yolJ-bdbB, sigO-rsoA, and sigX-rsiX), and negatively regulates the lytABC operon. The protein is Transcriptional regulatory protein YvrH (yvrH) of Bacillus subtilis (strain 168).